Consider the following 249-residue polypeptide: tRNA pseudouridine synthase A (249 aa).

The active-site Nucleophile is Asp-54. Residue Tyr-112 coordinates substrate.

This sequence belongs to the tRNA pseudouridine synthase TruA family. In terms of assembly, homodimer.

It catalyses the reaction uridine(38/39/40) in tRNA = pseudouridine(38/39/40) in tRNA. Its function is as follows. Formation of pseudouridine at positions 38, 39 and 40 in the anticodon stem and loop of transfer RNAs. The polypeptide is tRNA pseudouridine synthase A (Latilactobacillus sakei subsp. sakei (strain 23K) (Lactobacillus sakei subsp. sakei)).